Reading from the N-terminus, the 574-residue chain is Interactor of HORMAD1 protein 1 (574 aa).

The disordered stretch occupies residues 113–133 (GLSKQFEEKKRRATDQSDSET). Residues 117–127 (QFEEKKRRATD) are compositionally biased toward basic and acidic residues. Residues 217 to 240 (MEMKSTLKNLEVLVVEQTKNLQQF) are a coiled coil. Disordered regions lie at residues 267–324 (GHLK…GVWD), 372–393 (FSNLPSQRAGNGQGLMAQGASQ), and 426–457 (TEQKGRPCRKRRRGKKQQPQRSKRGGLLDRKQ). Low complexity predominate over residues 272–284 (STSQTSPSLTQSL). The span at 372-381 (FSNLPSQRAG) shows a compositional bias: polar residues. Basic residues predominate over residues 431–449 (RPCRKRRRGKKQQPQRSKR). Phosphoserine occurs at positions 476, 569, and 570.

In terms of assembly, part of the MCD recombinosome complex, at least composed of IHO1, REC114 and MEI4. Interacts with REC114. Interacts with MEI4. Interacts with HORMAD1. Interacts with ANKRD31. In terms of tissue distribution, detected in spermatocytes and testis (at protein level).

Its subcellular location is the chromosome. Its function is as follows. Required for DNA double-strand breaks (DSBs) formation in unsynapsed regions during meiotic recombination. Probably acts by forming a complex with MEI4 and REC114, which activates DSBs formation in unsynapsed regions, an essential step to ensure completion of synapsis. Not required for HORMAD1 functions in pairing-independent synaptonemal complex formation, ATR recruitment to unsynapsed axes, meiotic silencing of unsynapsed chromatin (MSUC) or meiotic surveillance. In Mus musculus (Mouse), this protein is Interactor of HORMAD1 protein 1.